Here is a 141-residue protein sequence, read N- to C-terminus: Large ribosomal subunit protein uL11 (141 aa).

It belongs to the universal ribosomal protein uL11 family. As to quaternary structure, part of the ribosomal stalk of the 50S ribosomal subunit. Interacts with L10 and the large rRNA to form the base of the stalk. L10 forms an elongated spine to which L12 dimers bind in a sequential fashion forming a multimeric L10(L12)X complex. One or more lysine residues are methylated.

Forms part of the ribosomal stalk which helps the ribosome interact with GTP-bound translation factors. In Thermomicrobium roseum (strain ATCC 27502 / DSM 5159 / P-2), this protein is Large ribosomal subunit protein uL11.